A 151-amino-acid chain; its full sequence is D-aminoacyl-tRNA deacylase (151 aa).

Residues 138–139 carry the Gly-cisPro motif, important for rejection of L-amino acids motif; sequence GP.

This sequence belongs to the DTD family. As to quaternary structure, homodimer.

The protein localises to the cytoplasm. The enzyme catalyses glycyl-tRNA(Ala) + H2O = tRNA(Ala) + glycine + H(+). It catalyses the reaction a D-aminoacyl-tRNA + H2O = a tRNA + a D-alpha-amino acid + H(+). Its function is as follows. An aminoacyl-tRNA editing enzyme that deacylates mischarged D-aminoacyl-tRNAs. Also deacylates mischarged glycyl-tRNA(Ala), protecting cells against glycine mischarging by AlaRS. Acts via tRNA-based rather than protein-based catalysis; rejects L-amino acids rather than detecting D-amino acids in the active site. By recycling D-aminoacyl-tRNA to D-amino acids and free tRNA molecules, this enzyme counteracts the toxicity associated with the formation of D-aminoacyl-tRNA entities in vivo and helps enforce protein L-homochirality. The protein is D-aminoacyl-tRNA deacylase of Magnetococcus marinus (strain ATCC BAA-1437 / JCM 17883 / MC-1).